The chain runs to 553 residues: Chaperonin GroEL (553 aa).

Residues 29 to 32 (TLGP), Lys50, 86 to 90 (DGTTT), Gly424, and Asp504 each bind ATP.

This sequence belongs to the chaperonin (HSP60) family. In terms of assembly, forms a cylinder of 14 subunits composed of two heptameric rings stacked back-to-back. Interacts with the co-chaperonin GroES.

The protein resides in the cytoplasm. It carries out the reaction ATP + H2O + a folded polypeptide = ADP + phosphate + an unfolded polypeptide.. In terms of biological role, together with its co-chaperonin GroES, plays an essential role in assisting protein folding. The GroEL-GroES system forms a nano-cage that allows encapsulation of the non-native substrate proteins and provides a physical environment optimized to promote and accelerate protein folding. In Koribacter versatilis (strain Ellin345), this protein is Chaperonin GroEL.